The chain runs to 138 residues: Small ribosomal subunit protein uS11c (138 aa).

Residues 1–23 (MAKPIPRIGSRRNGRIGSRKSAR) form a disordered region. The span at 9–23 (GSRRNGRIGSRKSAR) shows a compositional bias: basic residues.

Belongs to the universal ribosomal protein uS11 family. As to quaternary structure, part of the 30S ribosomal subunit.

Its subcellular location is the plastid. The protein resides in the chloroplast. The polypeptide is Small ribosomal subunit protein uS11c (Vitis vinifera (Grape)).